A 613-amino-acid polypeptide reads, in one-letter code: tRNA 5-methylaminomethyl-2-thiouridine biosynthesis bifunctional protein MnmC (613 aa).

The interval 1–225 (MKKAKLIFKD…KREMIKAYLE (225 aa)) is tRNA (mnm(5)s(2)U34)-methyltransferase. Positions 252 to 613 (IGAGISSAVL…FLVRKLKKGL (362 aa)) are FAD-dependent cmnm(5)s(2)U34 oxidoreductase.

It in the N-terminal section; belongs to the methyltransferase superfamily. tRNA (mnm(5)s(2)U34)-methyltransferase family. The protein in the C-terminal section; belongs to the DAO family. FAD is required as a cofactor.

It is found in the cytoplasm. The catalysed reaction is 5-aminomethyl-2-thiouridine(34) in tRNA + S-adenosyl-L-methionine = 5-methylaminomethyl-2-thiouridine(34) in tRNA + S-adenosyl-L-homocysteine + H(+). Its function is as follows. Catalyzes the last two steps in the biosynthesis of 5-methylaminomethyl-2-thiouridine (mnm(5)s(2)U) at the wobble position (U34) in tRNA. Catalyzes the FAD-dependent demodification of cmnm(5)s(2)U34 to nm(5)s(2)U34, followed by the transfer of a methyl group from S-adenosyl-L-methionine to nm(5)s(2)U34, to form mnm(5)s(2)U34. This chain is tRNA 5-methylaminomethyl-2-thiouridine biosynthesis bifunctional protein MnmC, found in Campylobacter jejuni subsp. doylei (strain ATCC BAA-1458 / RM4099 / 269.97).